The following is a 3969-amino-acid chain: Histone-lysine N-methyltransferase 2A (3969 aa).

Disordered stretches follow at residues 1 to 108 (MAHS…LLRV), 132 to 253 (VFGE…EDSL), and 301 to 352 (RRRG…RQSP). Residues 6–25 (RWRFPARPGTTGGGGGGGRR) carry the Menin-binding motif (MBM) motif. Gly residues predominate over residues 15–29 (TTGGGGGGGRRGLGG). 2 stretches are compositionally biased toward low complexity: residues 59-69 (AVAAAAAAAGS) and 77-104 (GAAAASAASSSSASSSSSSSSSASSGPA). An Integrase domain-binding motif 1 (IBM1) motif is present at residues 123–134 (GTNLRRFRAVFG). A phosphoserine; by CK2 mark is found at Ser-136 and Ser-142. Positions 147–152 (QFLGFG) match the Integrase domain-binding motif 2 (IBM2) motif. Ser-153 bears the Phosphoserine mark. A DNA-binding region (a.T hook 1) is located at residues 169–180 (KTSPRKPRGRPR). A Phosphoserine modification is found at Ser-197. Composition is skewed to basic and acidic residues over residues 202–220 (SETKSGDKIKKKDSKSIEK) and 237–253 (HGKDISELPKGNKEDSL). A DNA-binding region (a.T hook 2) is located at residues 217 to 227 (SIEKKRGRPPT). Lys-239 carries the post-translational modification N6-acetyllysine. Residues 301–309 (RRRGRPPST) constitute a DNA-binding region (a.T hook 3). A compositionally biased stretch (basic and acidic residues) spans 323 to 347 (ELEKPQKVRKDKEGTPPLTKEDKTV). The residue at position 373 (Lys-373) is an N6-acetyllysine. The disordered stretch occupies residues 445–585 (STPNSRFSAP…SSISDHTPWL (141 aa)). Positions 452–491 (SAPSCGSSEKSSAASQHSSQMSSDSSRSSSPSVDTSTDSQ) are enriched in low complexity. Phosphoserine is present on Ser-518. Residues 546–559 (LSTLQSAPQQQTSS) are compositionally biased toward low complexity. Residues 560 to 573 (SPPPPLLTPPPPLQ) are compositionally biased toward pro residues. At Lys-636 the chain carries N6-acetyllysine. Ser-680 bears the Phosphoserine mark. Disordered stretches follow at residues 713 to 780 (ESVT…SSSL), 798 to 949 (FPSH…TSVT), 1038 to 1066 (EKSKSLKQTDQPKAQGQESDSSETSVRGP), and 1106 to 1166 (SSMG…VPED). The segment covering 716-732 (TLPSNRTSAGTSSSGVS) has biased composition (polar residues). The segment covering 762–780 (LSSSELSPLTPPSSVSSSL) has biased composition (low complexity). Polar residues predominate over residues 798-808 (FPSHSLTQSGE). The span at 820 to 841 (TSAPAEPFSSSSPTPLFPWFTP) shows a compositional bias: low complexity. Thr-840 carries the post-translational modification Phosphothreonine. Residues 846–890 (ERGRNKDKAPEELSKDRDADKSVEKDKSRERDREREKENKRESRK) are compositionally biased toward basic and acidic residues. 2 positions are modified to phosphoserine: Ser-926 and Ser-1056. Residues 1043 to 1062 (LKQTDQPKAQGQESDSSETS) show a composition bias toward polar residues. Lys-1130 is modified (N6-acetyllysine). The CXXC-type zinc-finger motif lies at 1147–1195 (KKGRRSRRCGQCPGCQVPEDCGVCTNCLDKPKFGGRNIKKQCCKMRKCQ). Zn(2+)-binding residues include Cys-1155, Cys-1158, Cys-1161, Cys-1167, Cys-1170, Cys-1173, Cys-1189, and Cys-1194. The interval 1200-1375 (MPSKAYLQKQ…PPVNKQENAG (176 aa)) is disordered. The segment covering 1220 to 1232 (SKTSEKKDSKESS) has biased composition (basic and acidic residues). Residues 1233 to 1243 (VVKNVVDSSQK) show a composition bias toward low complexity. Lys-1235 is subject to N6-acetyllysine. The span at 1248–1273 (AREDPAPKKSSSEPPPRKPVEEKSEE) shows a compositional bias: basic and acidic residues. Over residues 1284–1300 (KQATTPASRKSSKQVSQ) the composition is skewed to polar residues. Positions 1304–1313 (VIPPQPPTTG) are enriched in pro residues. 3 consecutive PHD-type zinc fingers follow at residues 1431–1482 (RVVC…CKFC), 1479–1533 (CKFC…CVRC), and 1566–1627 (GNFC…CTER). An interaction with histone H3K4me3 region spans residues 1584–1600 (KMMQCGKCDRWVHSKCE). Residues 1635–1765 (ALEKELQISL…SFFIRQMERV (131 aa)) enclose the Bromo domain. Disordered regions lie at residues 1663–1713 (YRQA…GVKR) and 1806–1869 (QERE…GIED). The segment covering 1826-1847 (APKPKGPGEPDSPTPLHPPTPP) has biased composition (pro residues). Phosphoserine is present on Ser-1837. Phosphothreonine is present on Thr-1845. A Phosphoserine modification is found at Ser-1858. The C2HC pre-PHD-type zinc-finger motif lies at 1870-1910 (NRQCALCLTYGDDSANDAGRLLYIGQNEWTHVNCALWSAEV). A PHD-type 4 zinc finger spans residues 1931–1978 (LRCEFCQKPGATVGCCLTSCTSNYHFMCSRAKNCVFLDDKKVYCQRHR). Positions 2018 to 2074 (NIHMMIGSMTIDCLGILNDLSDCEDKLFPIGYQCSRVYWSTTDARKRCVYTCKIVEC) constitute an FYR N-terminal domain. 7 disordered regions span residues 2081–2133 (PDIN…TSGS), 2145–2232 (IRTP…TTGT), 2275–2333 (NKNS…KLAP), 2373–2460 (RGQR…EGNL), 2475–2618 (GQRP…RYPR), 2647–2675 (FYSSSTGKKRGKRSAEGQVDGADDLSTSD), and 2713–2821 (KISQ…KNLL). Positions 2095–2115 (IAHSPTSFTESSSKESQNTAE) are enriched in polar residues. Phosphoserine is present on Ser-2098. The residue at position 2147 (Thr-2147) is a Phosphothreonine. Phosphoserine is present on residues Ser-2151 and Ser-2201. Positions 2214 to 2232 (RTGNTYSRNNVSSVSTTGT) are enriched in polar residues. The segment covering 2283–2302 (SSSSEMKQSSASDLVSKSSS) has biased composition (low complexity). Polar residues-rich tracts occupy residues 2310–2319 (VLSSKSSEGS) and 2406–2421 (GMSNRSSIINEHMGSS). Over residues 2432–2442 (SCKETFKEKHS) the composition is skewed to basic and acidic residues. A Phosphothreonine modification is found at Thr-2525. Lys-2528 is covalently cross-linked (Glycyl lysine isopeptide (Lys-Gly) (interchain with G-Cter in SUMO2)). Polar residues-rich tracts occupy residues 2543–2563 (SPASPLQIESTSPTEPISASE) and 2573–2592 (PSPNNTSCQDSQSNNYQNLP). Ser-2611 bears the Phosphoserine mark. The span at 2726-2741 (SDTSVTATTRKSSQIP) shows a compositional bias: polar residues. The segment covering 2744–2782 (NGKENGTENLKIDRPEDAGEKEHVTKSSVGHKNEPKMDN) has biased composition (basic and acidic residues). Residues 2784-2795 (HSVSRVKTQGQD) show a composition bias toward polar residues. Ser-2796 is modified (phosphoserine). The span at 2796 to 2805 (SLEAQLSSLE) shows a compositional bias: low complexity. The span at 2812–2821 (TSTPSDKNLL) shows a compositional bias: polar residues. Residues 2847–2855 (SDIMDFVLK) carry the 9aaTAD motif. Ser-2955 carries the phosphoserine modification. At Lys-2958 the chain carries N6-acetyllysine. 2 disordered regions span residues 2961–3064 (TITE…NAAV) and 3166–3244 (PAAT…SNIA). Composition is skewed to polar residues over residues 2963 to 2972 (TEKSVASSES) and 3016 to 3030 (HGNNQDLTRNSSTPG). A Phosphoserine modification is found at Ser-3036. Over residues 3039–3064 (VPIQNQKYVPNSTDSPGPSQISNAAV) the composition is skewed to polar residues. The segment covering 3171 to 3182 (SSFPPNISNPPS) has biased composition (low complexity). The span at 3198 to 3216 (VSESSQRTDLSTTVATPSS) shows a compositional bias: polar residues. Residues 3218-3233 (LKKRPISRLQTRKNKK) are compositionally biased toward basic residues. The residue at position 3372 (Thr-3372) is a Phosphothreonine. Position 3462 is an N6-acetyllysine (Lys-3462). 2 disordered regions span residues 3464 to 3608 (GIHS…GQPA) and 3620 to 3643 (TQNPANEQESAEPKTVEEEESNFS). Residues 3476-3489 (SGPQVSNFTQTVDA) are compositionally biased toward polar residues. Positions 3508–3529 (SPTSPGGSPSSPSSGQRSASPS) are enriched in low complexity. Phosphoserine is present on residues Ser-3511, Ser-3515, and Ser-3527. A compositionally biased stretch (polar residues) spans 3591–3603 (QDTASVEQSSQKE). In terms of domain architecture, FYR C-terminal spans 3666 to 3747 (KKGLVFEISS…KHCRNYKFRF (82 aa)). The WDR5 interaction motif (WIN) motif lies at 3762 to 3767 (GSARAE). Positions 3785 to 3808 (HRQPPEYNPNDEEEEEVQLKSARR) are disordered. The SET domain maps to 3829 to 3945 (EAVGVYRSPI…RGEELTYDYK (117 aa)). The S-adenosyl-L-methionine site is built by His-3839 and Arg-3841. Cys-3882 carries the S-methylcysteine; by autocatalysis modification. S-adenosyl-L-methionine contacts are provided by residues Tyr-3883 and 3906–3907 (NH). Zn(2+)-binding residues include Cys-3909 and Cys-3957. In terms of domain architecture, Post-SET spans 3953–3969 (NKLPCNCGAKKCRKFLN). Asn-3958 lines the S-adenosyl-L-methionine pocket. The Zn(2+) site is built by Cys-3959 and Cys-3964.

It belongs to the class V-like SAM-binding methyltransferase superfamily. Histone-lysine methyltransferase family. TRX/MLL subfamily. As to quaternary structure, MLL cleavage product N320 heterodimerizes with MLL cleavage product C180 (via SET and FYRC domains). Component of some MLL1/MLL complex, at least composed of the core components KMT2A/MLL1, ASH2L, HCFC1/HCF1, HCFC2, WDR5, DPY30 and RBBP5, as well as the facultative components BACC1, CHD8, E2F6, HSP70, INO80C, KANSL1, LAS1L, MAX, MCRS1, MEN1, MGA, KAT8/MOF, PELP1, PHF20, PRP31, RING2, RUVB1/TIP49A, RUVB2/TIP49B, SENP3, TAF1, TAF4, TAF6, TAF7, TAF9 and TEX10. Forms a core complex with the evolutionary conserved subcomplex WRAD composed of WDR5, RBBP5, ASH2L/ASH2 and DPY30 subunits; WRAD differentially stimulates the methyltransferase activity. Interacts (via WIN motif) with WDR5; the interaction is direct. Interaction with WDR5 is required for stable interaction with ASH2L and RBBP5, and thereby also for optimal histone methyltransferase activity. Interacts with KAT8/MOF; the interaction is direct. Interacts with SBF1 and PPP1R15A. Interacts with ZNF335. Interacts with CLOCK and BMAL1 in a circadian manner. Interacts with PPIE; this results in decreased histone H3 methyltransferase activity. Interacts with CREBBP. Interacts with the WRAD complex composed of WDR5, RBBP5, ASH2L and DPY30. Interacts (via MBM motif) with MEN1. Interacts (via IBM motifs) with PSIP1 (via IBD domain) with moderate affinity whereas the KMT2A-MEN1 complex interacts with a greater affinity; MEN1 enhances interaction of KMT2A with PSIP1. Phosphorylation increases its affinity for PSIP1. Forms a complex with CREBBP and CREB1. In terms of assembly, (Microbial infection) Interacts with herpes virus 8/HHV-8 protein LANA1; this interaction regulates the MLL1 histone methyltransferase activity on viral DNA. Proteolytic cleavage by TASP1 generates MLL cleavage product N320 and MLL cleavage product C180, which reassemble through a non-covalent association. 2 cleavage sites exist, cleavage site 1 (CS1) and cleavage site 2 (CS2), to generate MLL cleavage products N320 and C180. CS2 is the major site. In terms of processing, phosphorylation increases its interaction with PSIP1. Post-translationally, auto-methylated at Cys-3882: auto-methylation is inhibited by the WRAD complex and unmodified histone H3. Heart, lung, brain and T- and B-lymphocytes.

It is found in the nucleus. It carries out the reaction L-lysyl(4)-[histone H3] + S-adenosyl-L-methionine = N(6)-methyl-L-lysyl(4)-[histone H3] + S-adenosyl-L-homocysteine + H(+). The enzyme catalyses N(6)-methyl-L-lysyl(4)-[histone H3] + S-adenosyl-L-methionine = N(6),N(6)-dimethyl-L-lysyl(4)-[histone H3] + S-adenosyl-L-homocysteine + H(+). It catalyses the reaction L-cysteinyl-[protein] + S-adenosyl-L-methionine = S-methyl-L-cysteinyl-[protein] + S-adenosyl-L-homocysteine + H(+). Its function is as follows. Histone methyltransferase that plays an essential role in early development and hematopoiesis. Catalytic subunit of the MLL1/MLL complex, a multiprotein complex that mediates both methylation of 'Lys-4' of histone H3 (H3K4me) complex and acetylation of 'Lys-16' of histone H4 (H4K16ac). Catalyzes methyl group transfer from S-adenosyl-L-methionine to the epsilon-amino group of 'Lys-4' of histone H3 (H3K4) via a non-processive mechanism. Part of chromatin remodeling machinery predominantly forms H3K4me1 and H3K4me2 methylation marks at active chromatin sites where transcription and DNA repair take place. Has weak methyltransferase activity by itself, and requires other component of the MLL1/MLL complex to obtain full methyltransferase activity. Has no activity toward histone H3 phosphorylated on 'Thr-3', less activity toward H3 dimethylated on 'Arg-8' or 'Lys-9', while it has higher activity toward H3 acetylated on 'Lys-9'. Binds to unmethylated CpG elements in the promoter of target genes and helps maintain them in the nonmethylated state. Required for transcriptional activation of HOXA9. Promotes PPP1R15A-induced apoptosis. Plays a critical role in the control of circadian gene expression and is essential for the transcriptional activation mediated by the CLOCK-BMAL1 heterodimer. Establishes a permissive chromatin state for circadian transcription by mediating a rhythmic methylation of 'Lys-4' of histone H3 (H3K4me) and this histone modification directs the circadian acetylation at H3K9 and H3K14 allowing the recruitment of CLOCK-BMAL1 to chromatin. Also has auto-methylation activity on Cys-3882 in absence of histone H3 substrate. The sequence is that of Histone-lysine N-methyltransferase 2A (KMT2A) from Homo sapiens (Human).